The sequence spans 293 residues: Nucleotide-binding protein BCQ_4976 (293 aa).

14–21 provides a ligand contact to ATP; the sequence is GMSGAGKT. Position 65–68 (65–68) interacts with GTP; the sequence is DLRG.

It belongs to the RapZ-like family.

In terms of biological role, displays ATPase and GTPase activities. The protein is Nucleotide-binding protein BCQ_4976 of Bacillus cereus (strain Q1).